We begin with the raw amino-acid sequence, 712 residues long: Patatin-like phospholipase domain-containing protein AFUA_1G04970 (712 aa).

Over residues 1 to 13 (MTSDEKSATRDIY) the composition is skewed to basic and acidic residues. Residues 1-20 (MTSDEKSATRDIYDPNTLPD) are disordered. Residues 85–105 (WPFLFTVFAWITVLGFAYTLT) traverse the membrane as a helical segment. Positions 275-466 (LCLSGGATFA…RTDIPIKALN (192 aa)) constitute a PNPLA domain. The short motif at 306-310 (GTSGG) is the GXSXG element. Catalysis depends on Ser308, which acts as the Nucleophile. The active-site Proton acceptor is Asp453. The segment at 628–688 (RRRQDRAQEH…PDARRSSMFE (61 aa)) is disordered. Composition is skewed to basic and acidic residues over residues 632–646 (DRAQ…ERLD) and 652–664 (RQSD…HYAE). Polar residues predominate over residues 667-676 (DSLSATSSRP). Residues 677–688 (HTPDARRSSMFE) show a composition bias toward basic and acidic residues.

Belongs to the PLPL family.

The protein resides in the membrane. Its function is as follows. Probable lipid hydrolase. The protein is Patatin-like phospholipase domain-containing protein AFUA_1G04970 of Aspergillus fumigatus (strain ATCC MYA-4609 / CBS 101355 / FGSC A1100 / Af293) (Neosartorya fumigata).